Consider the following 175-residue polypeptide: Methylated-DNA--protein-cysteine methyltransferase (175 aa).

Cysteine 142 functions as the Nucleophile; methyl group acceptor in the catalytic mechanism.

This sequence belongs to the MGMT family.

It localises to the cytoplasm. It carries out the reaction a 6-O-methyl-2'-deoxyguanosine in DNA + L-cysteinyl-[protein] = S-methyl-L-cysteinyl-[protein] + a 2'-deoxyguanosine in DNA. The catalysed reaction is a 4-O-methyl-thymidine in DNA + L-cysteinyl-[protein] = a thymidine in DNA + S-methyl-L-cysteinyl-[protein]. Functionally, involved in the cellular defense against the biological effects of O6-methylguanine (O6-MeG) and O4-methylthymine (O4-MeT) in DNA. Repairs the methylated nucleobase in DNA by stoichiometrically transferring the methyl group to a cysteine residue in the enzyme. This is a suicide reaction: the enzyme is irreversibly inactivated. This Thermococcus sibiricus (strain DSM 12597 / MM 739) protein is Methylated-DNA--protein-cysteine methyltransferase.